The following is a 323-amino-acid chain: Phosphoribosylformylglycinamidine cyclo-ligase (323 aa).

The protein belongs to the AIR synthase family.

Its subcellular location is the cytoplasm. It carries out the reaction 2-formamido-N(1)-(5-O-phospho-beta-D-ribosyl)acetamidine + ATP = 5-amino-1-(5-phospho-beta-D-ribosyl)imidazole + ADP + phosphate + H(+). It participates in purine metabolism; IMP biosynthesis via de novo pathway; 5-amino-1-(5-phospho-D-ribosyl)imidazole from N(2)-formyl-N(1)-(5-phospho-D-ribosyl)glycinamide: step 2/2. The chain is Phosphoribosylformylglycinamidine cyclo-ligase from Saccharolobus solfataricus (strain ATCC 35092 / DSM 1617 / JCM 11322 / P2) (Sulfolobus solfataricus).